The primary structure comprises 505 residues: Alpha-ketoglutarate-dependent dioxygenase FTO (505 aa).

Threonine 4 is modified (phosphothreonine). The segment at threonine 32–serine 327 is fe2OG dioxygenase domain. Residues arginine 96 and tyrosine 108 each contribute to the substrate site. Asparagine 205 serves as a coordination point for 2-oxoglutarate. A loop L1; predicted to block binding of double-stranded DNA or RNA region spans residues proline 213–glycine 224. Lysine 216 is subject to N6-acetyllysine. Positions 231 and 233 each coordinate Fe cation. Histidine 231–glutamate 234 contacts substrate. Residue tyrosine 295 coordinates 2-oxoglutarate. Histidine 307 contributes to the Fe cation binding site. 2-oxoglutarate is bound by residues arginine 316 to serine 318, threonine 320, and arginine 322.

It belongs to the fto family. As to quaternary structure, monomer. May also exist as homodimer. The cofactor is Fe(2+).

Its subcellular location is the nucleus. It is found in the nucleus speckle. The protein resides in the cytoplasm. The catalysed reaction is a 5'-end (N(7)-methyl 5'-triphosphoguanosine)-(N(6),2'-O-dimethyladenosine) in mRNA + 2-oxoglutarate + O2 = a 5'-end (N(7)-methyl 5'-triphosphoguanosine)-(2'-O-methyladenosine) in mRNA + formaldehyde + succinate + CO2. It carries out the reaction an N(6)-methyladenosine in mRNA + 2-oxoglutarate + O2 = an adenosine in mRNA + formaldehyde + succinate + CO2. It catalyses the reaction N(6)-methyladenosine in U6 snRNA + 2-oxoglutarate + O2 = adenosine in U6 snRNA + formaldehyde + succinate + CO2. The enzyme catalyses a 5'-end (N(7)-methyl 5'-triphosphoguanosine)-(N(6),2'-O-dimethyladenosine) in U6 snRNA + 2-oxoglutarate + O2 = a 5'-end (N(7)-methyl 5'-triphosphoguanosine)-(2'-O-methyladenosine) in U6 snRNA + formaldehyde + succinate + CO2. The catalysed reaction is an N(1)-methyladenosine in tRNA + 2-oxoglutarate + O2 = an adenosine in tRNA + formaldehyde + succinate + CO2. Its activity is regulated as follows. Activated by ascorbate. Inhibited by N-oxalylglycine, fumarate and succinate. RNA demethylase that mediates oxidative demethylation of different RNA species, such as mRNAs, tRNAs and snRNAs, and acts as a regulator of fat mass, adipogenesis and energy homeostasis. Specifically demethylates N(6)-methyladenosine (m6A) RNA, the most prevalent internal modification of messenger RNA (mRNA) in higher eukaryotes. M6A demethylation by FTO affects mRNA expression and stability. Also able to demethylate m6A in U6 small nuclear RNA (snRNA). Mediates demethylation of N(6),2'-O-dimethyladenosine cap (m6A(m)), by demethylating the N(6)-methyladenosine at the second transcribed position of mRNAs and U6 snRNA. Demethylation of m6A(m) in the 5'-cap by FTO affects mRNA stability by promoting susceptibility to decapping. Also acts as a tRNA demethylase by removing N(1)-methyladenine from various tRNAs. Has no activity towards 1-methylguanine. Has no detectable activity towards double-stranded DNA. Also able to repair alkylated DNA and RNA by oxidative demethylation: demethylates single-stranded RNA containing 3-methyluracil, single-stranded DNA containing 3-methylthymine and has low demethylase activity towards single-stranded DNA containing 1-methyladenine or 3-methylcytosine. Ability to repair alkylated DNA and RNA is however unsure in vivo. Involved in the regulation of fat mass, adipogenesis and body weight, thereby contributing to the regulation of body size and body fat accumulation. Involved in the regulation of thermogenesis and the control of adipocyte differentiation into brown or white fat cells. Regulates activity of the dopaminergic midbrain circuitry via its ability to demethylate m6A in mRNAs. The chain is Alpha-ketoglutarate-dependent dioxygenase FTO from Pongo abelii (Sumatran orangutan).